Reading from the N-terminus, the 509-residue chain is Transcription factor SOX-9 (509 aa).

Disordered regions lie at residues 1 to 66 and 160 to 271; these read MNLL…ESEE and RLRV…IDFR. Residues 27–41 are compositionally biased toward low complexity; that stretch reads SEGSRGSPCPSGSGS. The span at 42-52 shows a compositional bias: polar residues; that stretch reads DTENTRPQENT. Composition is skewed to basic and acidic residues over residues 56–66 and 160–174; these read GEPDLKKESEE and RLRVQHKKDHPDYKY. The tract at residues 63–103 is dimerization (DIM); it reads ESEEDKFPVCIREAVSQVLKGYDWTLVPMPVRVNGSSKNKP. Positions 63–103 are PQA; that stretch reads ESEEDKFPVCIREAVSQVLKGYDWTLVPMPVRVNGSSKNKP. The residue at position 64 (Ser64) is a Phosphoserine. The HMG box DNA-binding region spans 105 to 173; the sequence is VKRPMNAFMV…QHKKDHPDYK (69 aa). A Phosphoserine modification is found at Ser211. The segment at 224 to 307 is transactivation domain (TAM); that stretch reads PGEHSGQSQG…LPPNGHPGVP (84 aa). 2 consecutive short sequence motifs (9aaTAD) follow at residues 275–284 and 290–298; these read IGELSSDVIS and DVNEFDQYL. 2 disordered regions span residues 335–415 and 420–439; these read WMSK…QHSP and YSPFNLPHYSPSYPPITRSQ. Over residues 341 to 359 the composition is skewed to pro residues; it reads APPPPPHPPQQPPPVPQAP. The segment covering 360 to 369 has biased composition (low complexity); sequence AQPQAALPQQ. Residues 380-415 are compositionally biased toward polar residues; that stretch reads HTLTTLSSEPGQSQRTHIKTEQLSPSHYSEQQQHSP. The tract at residues 394–509 is transactivation domain (TAC); the sequence is RTHIKTEQLS…QPVYTQLTRP (116 aa). Residue Lys398 forms a Glycyl lysine isopeptide (Lys-Gly) (interchain with G-Cter in ubiquitin) linkage. Positions 460–468 match the 9aaTAD 3 motif; it reads SVLYSTFTY. Residues 479-509 are disordered; the sequence is PIADTSGVPSIPQTHSPQHWEQPVYTQLTRP. Residues 485-509 show a composition bias toward polar residues; sequence GVPSIPQTHSPQHWEQPVYTQLTRP.

In terms of assembly, homodimer; homodimerization is required for activity. Interacts (via C-terminus) with ZNF219; forming a complex that binds to the COL2A1 promoter and activates COL2A1 expression. Interacts with DDRGK1. Interacts with EP300/p300. Interacts with beta-catenin (CTNNB1); inhibiting CTNNB1 activity by competing with the binding sites of TCF/LEF within CTNNB1. In terms of processing, acetylated; acetylation impairs nuclear localization and ability to transactivate expression of target genes. Deacetylated by SIRT1. Phosphorylation at Ser-64 and Ser-211 by PKA increases transcriptional activity and may help delay chondrocyte maturation downstream of PTHLH/PTHrP signaling. Phosphorylation at either Ser-64 or Ser-211 is required for sumoylation, but phosphorylation is not dependent on sumoylation. Phosphorylated on tyrosine residues; tyrosine dephosphorylation by PTPN11/SHP2 blocks SOX9 phosphorylation by PKA and subsequent SUMOylation. Post-translationally, sumoylated; phosphorylation at either Ser-64 or Ser-211 is required for sumoylation. Sumoylation is induced by BMP signaling pathway. In terms of processing, ubiquitinated; ubiquitination leads to proteasomal degradation and is negatively regulated by DDRGK1.

It is found in the nucleus. In terms of biological role, transcription factor that plays a key role in chondrocytes differentiation and skeletal development. Specifically binds the 5'-ACAAAG-3' DNA motif present in enhancers and super-enhancers and promotes expression of genes important for chondrogenesis, including cartilage matrix protein-coding genes COL2A1, COL4A2, COL9A1, COL11A2 and ACAN, SOX5 and SOX6. Also binds to some promoter regions. Plays a central role in successive steps of chondrocyte differentiation. Absolutely required for precartilaginous condensation, the first step in chondrogenesis during which skeletal progenitors differentiate into prechondrocytes. Together with SOX5 and SOX6, required for overt chondrogenesis when condensed prechondrocytes differentiate into early stage chondrocytes, the second step in chondrogenesis. Later, required to direct hypertrophic maturation and block osteoblast differentiation of growth plate chondrocytes: maintains chondrocyte columnar proliferation, delays prehypertrophy and then prevents osteoblastic differentiation of chondrocytes by lowering beta-catenin (CTNNB1) signaling and RUNX2 expression. Also required for chondrocyte hypertrophy, both indirectly, by keeping the lineage fate of chondrocytes, and directly, by remaining present in upper hypertrophic cells and transactivating COL10A1 along with MEF2C. Low lipid levels are the main nutritional determinant for chondrogenic commitment of skeletal progenitor cells: when lipids levels are low, FOXO (FOXO1 and FOXO3) transcription factors promote expression of SOX9, which induces chondrogenic commitment and suppresses fatty acid oxidation. Mechanistically, helps, but is not required, to remove epigenetic signatures of transcriptional repression and deposit active promoter and enhancer marks at chondrocyte-specific genes. Acts in cooperation with the Hedgehog pathway-dependent GLI (GLI1 and GLI3) transcription factors. In addition to cartilage development, also acts as a regulator of proliferation and differentiation in epithelial stem/progenitor cells: involved in the lung epithelium during branching morphogenesis, by balancing proliferation and differentiation and regulating the extracellular matrix. Controls epithelial branching during kidney development. The polypeptide is Transcription factor SOX-9 (SOX9) (Sus scrofa (Pig)).